Here is a 938-residue protein sequence, read N- to C-terminus: Isoleucine--tRNA ligase (938 aa).

The 'HIGH' region motif lies at 58 to 68 (PYANGSIHIGH). Position 183 is an N6-acetyllysine (lysine 183). Glutamate 561 is an L-isoleucyl-5'-AMP binding site. The short motif at 602 to 606 (KMSKS) is the 'KMSKS' region element. ATP is bound at residue lysine 605. Zn(2+) is bound by residues cysteine 901, cysteine 904, cysteine 921, and cysteine 924.

This sequence belongs to the class-I aminoacyl-tRNA synthetase family. IleS type 1 subfamily. In terms of assembly, monomer. Zn(2+) is required as a cofactor.

It is found in the cytoplasm. The enzyme catalyses tRNA(Ile) + L-isoleucine + ATP = L-isoleucyl-tRNA(Ile) + AMP + diphosphate. Functionally, catalyzes the attachment of isoleucine to tRNA(Ile). As IleRS can inadvertently accommodate and process structurally similar amino acids such as valine, to avoid such errors it has two additional distinct tRNA(Ile)-dependent editing activities. One activity is designated as 'pretransfer' editing and involves the hydrolysis of activated Val-AMP. The other activity is designated 'posttransfer' editing and involves deacylation of mischarged Val-tRNA(Ile). This Escherichia coli O9:H4 (strain HS) protein is Isoleucine--tRNA ligase.